A 356-amino-acid polypeptide reads, in one-letter code: MITRSIGIARRSNSINCIVGSNTSTSYSLDESTKRWISTSTKQPMSLIPTASSLVASSPPNLKPYLQLMRVDKPIGTWLLYWPCTWSIAMATPAGQLPSIYMLSLFGAGAFLMRSAGCVINDLWDKDFDKKVERTKLRPLACGSLTEKQAIGLLAGLLSSSLAILLQLNWYSVAVGASSMALVVGYPLAKRFTYWPQFVLGLTFNWGALLGWCALKGDLSSSAPFWMYAAALQWTLIYDTIYAHQDKADDIMIGVKSTALRLGADTKKWLSAFGVGTVASLTACGIASDQTWPYYVALAATTAQLGWQVGTVDIDNGSDCWDKFKSNSWMGIILFSGIVASTLLKEVFQILIRPYH.

Residues 1 to 44 (MITRSIGIARRSNSINCIVGSNTSTSYSLDESTKRWISTSTKQP) constitute a mitochondrion transit peptide. Transmembrane regions (helical) follow at residues 71–91 (VDKPIGTWLLYWPCTWSIAMA), 93–113 (PAGQLPSIYMLSLFGAGAFLM), 150–170 (AIGLLAGLLSSSLAILLQLNW), 195–215 (WPQFVLGLTFNWGALLGWCAL), 269–289 (WLSAFGVGTVASLTACGIASD), and 332–352 (IILFSGIVASTLLKEVFQILI).

Belongs to the UbiA prenyltransferase family. Requires Mg(2+) as cofactor.

Its subcellular location is the mitochondrion inner membrane. It catalyses the reaction an all-trans-polyprenyl diphosphate + 4-hydroxybenzoate = a 4-hydroxy-3-(all-trans-polyprenyl)benzoate + diphosphate. It functions in the pathway cofactor biosynthesis; ubiquinone biosynthesis. Its function is as follows. Catalyzes the prenylation of para-hydroxybenzoate (PHB) with an all-trans polyprenyl group. Mediates the second step in the final reaction sequence of coenzyme Q (CoQ) biosynthesis, which is the condensation of the polyisoprenoid side chain with PHB, generating the first membrane-bound Q intermediate. The polypeptide is 4-hydroxybenzoate polyprenyltransferase, mitochondrial (coq-2) (Caenorhabditis elegans).